Reading from the N-terminus, the 635-residue chain is Chaperone protein HtpG (635 aa).

The tract at residues 1–346 is a; substrate-binding; sequence MSQTTTTSAS…SADLPLNVSR (346 aa). The segment at 347 to 563 is b; it reads EILQESRDVR…QNELSPHLLR (217 aa). Residues 564–635 form a c region; the sequence is MLKAAGQEAP…KRLNGLLLKA (72 aa).

Belongs to the heat shock protein 90 family. As to quaternary structure, homodimer.

The protein resides in the cytoplasm. In terms of biological role, molecular chaperone. Has ATPase activity. This is Chaperone protein HtpG from Bordetella pertussis (strain Tohama I / ATCC BAA-589 / NCTC 13251).